A 600-amino-acid chain; its full sequence is ATP-dependent lipid A-core flippase (600 aa).

Transmembrane regions (helical) follow at residues 26-46 (VGIF…QPML), 82-102 (LLIV…NYFL), 167-187 (VFLF…MLAI), and 266-286 (PMLQ…VLFL). An ABC transmembrane type-1 domain is found at 30–321 (LLSILGFVIF…LSEVSSTIQK (292 aa)). The ABC transporter domain maps to 353 to 589 (LEVKNLSFFY…NGYYARLHAM (237 aa)). 387–394 (GRSGSGKS) is an ATP binding site.

It belongs to the ABC transporter superfamily. Lipid exporter (TC 3.A.1.106) family. As to quaternary structure, homodimer.

The protein localises to the cell inner membrane. The catalysed reaction is ATP + H2O + lipid A-core oligosaccharideSide 1 = ADP + phosphate + lipid A-core oligosaccharideSide 2.. Its function is as follows. Involved in lipopolysaccharide (LPS) biosynthesis. Translocates lipid A-core from the inner to the outer leaflet of the inner membrane. Transmembrane domains (TMD) form a pore in the inner membrane and the ATP-binding domain (NBD) is responsible for energy generation. This Pseudomonas syringae pv. tomato (strain ATCC BAA-871 / DC3000) protein is ATP-dependent lipid A-core flippase.